The chain runs to 607 residues: Fucose-1-phosphate guanylyltransferase (607 aa).

The tract at residues 1-21 (MRAVRRGLREGGAMAAARDPP) is disordered.

In terms of tissue distribution, expressed in many tissues.

The protein localises to the cytoplasm. The catalysed reaction is beta-L-fucose 1-phosphate + GTP + H(+) = GDP-beta-L-fucose + diphosphate. In terms of biological role, catalyzes the formation of GDP-L-fucose from GTP and L-fucose-1-phosphate. Functions as a salvage pathway to reutilize L-fucose arising from the turnover of glycoproteins and glycolipids. The polypeptide is Fucose-1-phosphate guanylyltransferase (Homo sapiens (Human)).